The primary structure comprises 24 residues: Chlorate reductase subunit beta (24 aa).

As to quaternary structure, heterotrimer of alpha, beta and gamma subunits. [3Fe-4S] cluster serves as cofactor. Requires [4Fe-4S] cluster as cofactor.

The protein resides in the cytoplasm. Functionally, electron transfer subunit of the chlorate reductase. The protein is Chlorate reductase subunit beta of Stutzerimonas chloritidismutans (Pseudomonas chloritidismutans).